We begin with the raw amino-acid sequence, 217 residues long: Uracil-DNA glycosylase (217 aa).

The active-site Proton acceptor is aspartate 62.

This sequence belongs to the uracil-DNA glycosylase (UDG) superfamily. UNG family.

It localises to the cytoplasm. The catalysed reaction is Hydrolyzes single-stranded DNA or mismatched double-stranded DNA and polynucleotides, releasing free uracil.. Its function is as follows. Excises uracil residues from the DNA which can arise as a result of misincorporation of dUMP residues by DNA polymerase or due to deamination of cytosine. The chain is Uracil-DNA glycosylase from Streptococcus pyogenes serotype M49 (strain NZ131).